We begin with the raw amino-acid sequence, 93 residues long: Protein FptB (93 aa).

A signal peptide spans 1–25 (MPRQSGFGWAWRVPLALAGSLAAAT). 2 consecutive transmembrane segments (helical) span residues 44 to 64 (LYAG…GGLL) and 71 to 91 (FAWR…LLAG).

It is found in the cell membrane. Functionally, may play some role in transport of Fe(3+)-pyochelin. The sequence is that of Protein FptB (fptB) from Pseudomonas aeruginosa (strain ATCC 15692 / DSM 22644 / CIP 104116 / JCM 14847 / LMG 12228 / 1C / PRS 101 / PAO1).